The sequence spans 403 residues: Ribosomal RNA large subunit methyltransferase I (403 aa).

The PUA domain occupies 9–88 (YPRLVLSKGR…ESIDIAFFTR (80 aa)).

This sequence belongs to the methyltransferase superfamily. RlmI family.

The protein resides in the cytoplasm. The enzyme catalyses cytidine(1962) in 23S rRNA + S-adenosyl-L-methionine = 5-methylcytidine(1962) in 23S rRNA + S-adenosyl-L-homocysteine + H(+). In terms of biological role, specifically methylates the cytosine at position 1962 (m5C1962) of 23S rRNA. This chain is Ribosomal RNA large subunit methyltransferase I, found in Salmonella choleraesuis (strain SC-B67).